The sequence spans 205 residues: Transcription termination/antitermination protein NusG (205 aa).

Residues G154–R178 form the KOW domain.

It belongs to the NusG family.

Its function is as follows. Participates in transcription elongation, termination and antitermination. This chain is Transcription termination/antitermination protein NusG, found in Synechocystis sp. (strain ATCC 27184 / PCC 6803 / Kazusa).